Here is a 299-residue protein sequence, read N- to C-terminus: Protease HtpX homolog (299 aa).

A run of 2 helical transmembrane segments spans residues 14 to 34 and 39 to 59; these read ILVM…VGYL and ATGG…IMVG. His-144 is a binding site for Zn(2+). The active site involves Glu-145. Residue His-148 coordinates Zn(2+). 2 consecutive transmembrane segments (helical) span residues 159–179 and 196–216; these read IALA…NFMW and VFAI…ATMV. Residue Glu-225 participates in Zn(2+) binding.

Belongs to the peptidase M48B family. Requires Zn(2+) as cofactor.

The protein localises to the cell membrane. The polypeptide is Protease HtpX homolog (Limosilactobacillus fermentum (strain NBRC 3956 / LMG 18251) (Lactobacillus fermentum)).